The chain runs to 141 residues: Large ribosomal subunit protein uL11 (141 aa).

Belongs to the universal ribosomal protein uL11 family. Part of the ribosomal stalk of the 50S ribosomal subunit. Interacts with L10 and the large rRNA to form the base of the stalk. L10 forms an elongated spine to which L12 dimers bind in a sequential fashion forming a multimeric L10(L12)X complex. Post-translationally, one or more lysine residues are methylated.

Forms part of the ribosomal stalk which helps the ribosome interact with GTP-bound translation factors. The chain is Large ribosomal subunit protein uL11 from Fervidobacterium nodosum (strain ATCC 35602 / DSM 5306 / Rt17-B1).